The primary structure comprises 346 residues: tRNA N6-adenosine threonylcarbamoyltransferase (346 aa).

Fe cation contacts are provided by histidine 111 and histidine 115. Substrate contacts are provided by residues leucine 134–glycine 138, aspartate 167, glycine 180, aspartate 184, and asparagine 279. Position 307 (aspartate 307) interacts with Fe cation.

This sequence belongs to the KAE1 / TsaD family. Fe(2+) serves as cofactor.

The protein resides in the cytoplasm. The catalysed reaction is L-threonylcarbamoyladenylate + adenosine(37) in tRNA = N(6)-L-threonylcarbamoyladenosine(37) in tRNA + AMP + H(+). In terms of biological role, required for the formation of a threonylcarbamoyl group on adenosine at position 37 (t(6)A37) in tRNAs that read codons beginning with adenine. Is involved in the transfer of the threonylcarbamoyl moiety of threonylcarbamoyl-AMP (TC-AMP) to the N6 group of A37, together with TsaE and TsaB. TsaD likely plays a direct catalytic role in this reaction. This chain is tRNA N6-adenosine threonylcarbamoyltransferase, found in Trichormus variabilis (strain ATCC 29413 / PCC 7937) (Anabaena variabilis).